The chain runs to 352 residues: Photosystem II protein D1 (352 aa).

Thr-2 is subject to N-acetylthreonine. Thr-2 carries the phosphothreonine modification. 3 helical membrane passes run 29–46 (YIGW…TATS), 118–133 (HFLL…EWEL), and 142–156 (WIAV…AASA). Chlorophyll a is bound at residue His-118. Position 126 (Tyr-126) interacts with pheophytin a. Positions 170 and 189 each coordinate [CaMn4O5] cluster. The chain crosses the membrane as a helical span at residues 197-218 (FHMLGVAGVFGGSLFSAMHGSL). His-198 provides a ligand contact to chlorophyll a. Residues His-215 and 264-265 (SF) contribute to the a quinone site. His-215 contacts Fe cation. His-272 lines the Fe cation pocket. Residues 274 to 288 (FLAAWPVIGIWFTAL) traverse the membrane as a helical segment. His-332, Glu-333, Asp-342, and Ala-344 together coordinate [CaMn4O5] cluster. Positions 345 to 352 (STNSSSNN) are excised as a propeptide.

Belongs to the reaction center PufL/M/PsbA/D family. In terms of assembly, PSII is composed of 1 copy each of membrane proteins PsbA, PsbB, PsbC, PsbD, PsbE, PsbF, PsbH, PsbI, PsbJ, PsbK, PsbL, PsbM, PsbT, PsbX, PsbY, PsbZ, Psb30/Ycf12, at least 3 peripheral proteins of the oxygen-evolving complex and a large number of cofactors. It forms dimeric complexes. The cofactor is The D1/D2 heterodimer binds P680, chlorophylls that are the primary electron donor of PSII, and subsequent electron acceptors. It shares a non-heme iron and each subunit binds pheophytin, quinone, additional chlorophylls, carotenoids and lipids. D1 provides most of the ligands for the Mn4-Ca-O5 cluster of the oxygen-evolving complex (OEC). There is also a Cl(-1) ion associated with D1 and D2, which is required for oxygen evolution. The PSII complex binds additional chlorophylls, carotenoids and specific lipids.. Tyr-161 forms a radical intermediate that is referred to as redox-active TyrZ, YZ or Y-Z. Post-translationally, C-terminally processed by CTPA; processing is essential to allow assembly of the oxygen-evolving complex and thus photosynthetic growth.

It is found in the plastid. Its subcellular location is the chloroplast thylakoid membrane. It carries out the reaction 2 a plastoquinone + 4 hnu + 2 H2O = 2 a plastoquinol + O2. In terms of biological role, this is one of the two reaction center proteins of photosystem II. Photosystem II (PSII) is a light-driven water:plastoquinone oxidoreductase that uses light energy to abstract electrons from H(2)O, generating O(2) and a proton gradient subsequently used for ATP formation. It consists of a core antenna complex that captures photons, and an electron transfer chain that converts photonic excitation into a charge separation. The D1/D2 (PsbA/PsbD) reaction center heterodimer binds P680, the primary electron donor of PSII as well as several subsequent electron acceptors. This Chlamydomonas reinhardtii (Chlamydomonas smithii) protein is Photosystem II protein D1.